The chain runs to 145 residues: MKGLIQRVRGARVEVAGEIVGAIDNGLLALVAVEPEDTPEHADKLLHKLLNYRVFSDEQGKMNRSLKDIGGGLLLVSQFTLAADTRNGMRPSFSTAAPPALGAELFDYLLQRAQGQHPDVASGRFGADMQVHLVNDGPVTFMLQI.

Residues 137-138 (GP) carry the Gly-cisPro motif, important for rejection of L-amino acids motif.

The protein belongs to the DTD family. Homodimer.

It localises to the cytoplasm. It carries out the reaction glycyl-tRNA(Ala) + H2O = tRNA(Ala) + glycine + H(+). The enzyme catalyses a D-aminoacyl-tRNA + H2O = a tRNA + a D-alpha-amino acid + H(+). An aminoacyl-tRNA editing enzyme that deacylates mischarged D-aminoacyl-tRNAs. Also deacylates mischarged glycyl-tRNA(Ala), protecting cells against glycine mischarging by AlaRS. Acts via tRNA-based rather than protein-based catalysis; rejects L-amino acids rather than detecting D-amino acids in the active site. By recycling D-aminoacyl-tRNA to D-amino acids and free tRNA molecules, this enzyme counteracts the toxicity associated with the formation of D-aminoacyl-tRNA entities in vivo and helps enforce protein L-homochirality. This is D-aminoacyl-tRNA deacylase from Pseudomonas entomophila (strain L48).